Reading from the N-terminus, the 517-residue chain is Protein MGF 505-2R (517 aa).

The protein belongs to the asfivirus MGF 505 family.

In terms of biological role, plays a role in virus cell tropism, and may be required for efficient virus replication in macrophages. This chain is Protein MGF 505-2R, found in Ornithodoros (relapsing fever ticks).